A 107-amino-acid chain; its full sequence is MSISLTEAAANRVRSFLANRGKGEGLRLGVRTSGCSGMAYVLEFADVINDEDTVFEDKGVKVIIDGKSMVYLDGTELDFVKEGLNEGFKFNNPNVANECGCGESFTV.

3 residues coordinate Fe cation: Cys35, Cys99, and Cys101.

The protein belongs to the HesB/IscA family. As to quaternary structure, homodimer; may form tetramers and higher multimers. Fe cation serves as cofactor.

Functionally, is able to transfer iron-sulfur clusters to apo-ferredoxin. Multiple cycles of [2Fe2S] cluster formation and transfer are observed, suggesting that IscA acts catalytically. Recruits intracellular free iron so as to provide iron for the assembly of transient iron-sulfur cluster in IscU in the presence of IscS, L-cysteine and the thioredoxin reductase system TrxA/TrxB. This chain is Iron-binding protein IscA, found in Proteus mirabilis (strain HI4320).